The following is a 438-amino-acid chain: UDP-N-acetylmuramoylalanine--D-glutamate ligase (438 aa).

Gly112 to Thr118 is an ATP binding site.

It belongs to the MurCDEF family.

The protein resides in the cytoplasm. The enzyme catalyses UDP-N-acetyl-alpha-D-muramoyl-L-alanine + D-glutamate + ATP = UDP-N-acetyl-alpha-D-muramoyl-L-alanyl-D-glutamate + ADP + phosphate + H(+). It functions in the pathway cell wall biogenesis; peptidoglycan biosynthesis. Cell wall formation. Catalyzes the addition of glutamate to the nucleotide precursor UDP-N-acetylmuramoyl-L-alanine (UMA). The sequence is that of UDP-N-acetylmuramoylalanine--D-glutamate ligase from Shigella dysenteriae serotype 1 (strain Sd197).